A 299-amino-acid polypeptide reads, in one-letter code: Putative fructokinase (299 aa).

ATP is bound at residue Thr-130. Residues His-153, Cys-168, His-171, and Cys-174 each contribute to the Zn(2+) site. ATP is bound by residues Pro-182 and 230–234; that span reads GVMQQ.

Belongs to the ROK (NagC/XylR) family. It depends on Mg(2+) as a cofactor.

It catalyses the reaction D-fructose + ATP = D-fructose 6-phosphate + ADP + H(+). Its activity is regulated as follows. Inhibited by zinc ions. Functionally, seems to be involved in the degradation of glucomannan. The protein is Putative fructokinase (gmuE) of Bacillus subtilis (strain 168).